Consider the following 159-residue polypeptide: Large ribosomal subunit protein uL15 (159 aa).

Positions Met-1–Thr-13 are enriched in basic and acidic residues. The segment at Met-1–Glu-51 is disordered. Residues Ile-23–Met-35 are compositionally biased toward gly residues.

The protein belongs to the universal ribosomal protein uL15 family. Part of the 50S ribosomal subunit.

In terms of biological role, binds to the 23S rRNA. The protein is Large ribosomal subunit protein uL15 of Rippkaea orientalis (strain PCC 8801 / RF-1) (Cyanothece sp. (strain PCC 8801)).